The following is a 106-amino-acid chain: NADH dehydrogenase [ubiquinone] iron-sulfur protein 5 (106 aa).

The CHCH domain occupies 30–74 (APRCHAFEKEWIECAHGIGAIRAEKECKIEYDDFIECLLRQKTMR). 2 consecutive short sequence motifs (cx9C motif) follow at residues 33–43 (CHAFEKEWIEC) and 56–66 (CKIEYDDFIEC). Disulfide bonds link C33/C66 and C43/C56. The tract at residues 87-106 (IKEGKYTPPPHHIGKGEPRP) is disordered.

Belongs to the complex I NDUFS5 subunit family. As to quaternary structure, mammalian complex I is composed of 45 different subunits. This is a component of the iron-sulfur (IP) fragment of the enzyme.

It is found in the mitochondrion inner membrane. The protein localises to the mitochondrion intermembrane space. Accessory subunit of the mitochondrial membrane respiratory chain NADH dehydrogenase (Complex I), that is believed not to be involved in catalysis. Complex I functions in the transfer of electrons from NADH to the respiratory chain. The immediate electron acceptor for the enzyme is believed to be ubiquinone. This is NADH dehydrogenase [ubiquinone] iron-sulfur protein 5 (NDUFS5) from Macaca fascicularis (Crab-eating macaque).